The following is a 191-amino-acid chain: Tellurium resistance protein TerE (191 aa).

This sequence belongs to the CAPAB/TerDEXZ family.

Its function is as follows. Not known; seems to contribute to the tellurium resistance (Ter) mechanism. Also involved in phage inhibition (Phi) and colicin resistance (PacB). The polypeptide is Tellurium resistance protein TerE (terE) (Serratia marcescens).